The primary structure comprises 384 residues: MINDLITLTQQLIRQPSITPNDCNCQKIITDYLKSLQFNIEPMNSSNTSNIWAYRYGYDQKKYTTLLFAGHTDVVPPGDIHNWQYPPFSGTVHNNIIYGRGSSDMKGALAAMLVATKSFIQKYPKHKNRIAFIITSDEEGSGIHGTKKIIKSLIHRHEHINYCIIGEPSSNNKIGDVIKNGRRGSCTGKLVIHGSQGHVAYPQFLKNPIHLAIPILSKLLNTMWDQHKSTLFPDTSIQITHLHTIPINYSTNNITPEQLILNFNFRFNDQSTMHSIHNNINKILSNYHVTYHLHWESKSEPYFSAPGKLVNIIIDIIKKYYNITPQLNTTGGTSDGRFIIQTGAEIIELGALNNTIHKVNECIDLVDLKSLSHIYFKIMEKILL.

Residue His-71 participates in Zn(2+) binding. Residue Asp-73 is part of the active site. Asp-104 contributes to the Zn(2+) binding site. Glu-138 (proton acceptor) is an active-site residue. The Zn(2+) site is built by Glu-139, Glu-167, and His-357.

This sequence belongs to the peptidase M20A family. DapE subfamily. In terms of assembly, homodimer. Zn(2+) is required as a cofactor. Co(2+) serves as cofactor.

It catalyses the reaction N-succinyl-(2S,6S)-2,6-diaminopimelate + H2O = (2S,6S)-2,6-diaminopimelate + succinate. Its pathway is amino-acid biosynthesis; L-lysine biosynthesis via DAP pathway; LL-2,6-diaminopimelate from (S)-tetrahydrodipicolinate (succinylase route): step 3/3. Catalyzes the hydrolysis of N-succinyl-L,L-diaminopimelic acid (SDAP), forming succinate and LL-2,6-diaminopimelate (DAP), an intermediate involved in the bacterial biosynthesis of lysine and meso-diaminopimelic acid, an essential component of bacterial cell walls. The polypeptide is Succinyl-diaminopimelate desuccinylase (Blochmanniella floridana).